Consider the following 502-residue polypeptide: Uric acid degradation bifunctional protein (502 aa).

The segment at 1 to 178 (MMRLKQLNEM…NSMTKHKERV (178 aa)) is OHCU decarboxylase. The active-site Proton donor; for OHCU decarboxylase activity is His68. Residues Pro69, 81-85 (SQEEQ), and 116-120 (FVMAV) contribute to the 5-hydroxy-2-oxo-4-ureido-2,5-dihydro-1H-imidazole-5-carboxylate site. The interval 179–502 (MYYGKGDVFA…DEPDHKGALK (324 aa)) is urate oxidase. Lys183 (charge relay system; for urate oxidase activity) is an active-site residue. Lys194 (charge relay system) is an active-site residue. Thr243 acts as the Charge relay system; for urate oxidase activity in catalysis. 7 residues coordinate urate: Thr243, Asp244, Phe354, Arg371, Ile419, Gln420, and Asn446.

In the N-terminal section; belongs to the OHCU decarboxylase family. The protein in the C-terminal section; belongs to the uricase family.

It catalyses the reaction 5-hydroxy-2-oxo-4-ureido-2,5-dihydro-1H-imidazole-5-carboxylate + H(+) = (S)-allantoin + CO2. The catalysed reaction is urate + O2 + H2O = 5-hydroxyisourate + H2O2. Its pathway is purine metabolism; urate degradation; (S)-allantoin from urate: step 1/3. It functions in the pathway purine metabolism; urate degradation; (S)-allantoin from urate: step 3/3. Its function is as follows. Catalyzes two steps in the degradation of uric acid, i.e. the oxidation of uric acid to 5-hydroxyisourate (HIU) and the stereoselective decarboxylation of 2-oxo-4-hydroxy-4-carboxy-5-ureidoimidazoline (OHCU) to (S)-allantoin. The protein is Uric acid degradation bifunctional protein (uao) of Bacillus sp. (strain TB-90).